A 1083-amino-acid chain; its full sequence is Glutamate receptor-interacting protein 2 (1083 aa).

3 consecutive PDZ domains span residues 58–141 (IVEL…EYEL), 156–244 (TIEI…EYDV), and 258–342 (LVEI…LPAH). Over residues 408 to 422 (AGTPGFSSQNSNTLP) the composition is skewed to polar residues. The tract at residues 408-460 (AGTPGFSSQNSNTLPRTVHPMSPRTTMNRRRQKRKDHKSSLSLASSTVGPGGQ) is disordered. Residues 434–444 (MNRRRQKRKDH) are compositionally biased toward basic residues. PDZ domains are found at residues 468–555 (EIIL…EIEF), 569–652 (HVKL…RKDE), and 667–749 (TVEL…KKQT). Disordered regions lie at residues 754 to 783 (PQRL…LSEI), 853 to 872 (NEQD…GLET), and 936 to 965 (GSHH…VHNA). The span at 774–783 (SQKTSKLSEI) shows a compositional bias: polar residues. Residues 945–963 (PKKENKLSQDARSKKEEVH) are compositionally biased toward basic and acidic residues. The PDZ 7 domain occupies 974–1056 (KVTVQKDMDT…RLDLVISRGL (83 aa)).

It belongs to the GRIP2 family. Enriched in the mitochondrial cloud of stage I oocytes, before becoming concentrated at the tip of the vegetal cortex in stage II oocytes. Expression becomes localized to the germ plasm of stage III-IV oocytes and early cleavage stages. At the tailbud stage, localizes to the migrating primordial germ cells (PGCs) until PGC migration is complete (stage 40), at which point expression disappears. In the adult, expressed in the brain, ovary, eye, muscle, spinal cord and very weakly in adipocytes.

The protein localises to the cytoplasm. Its function is as follows. Plays an important role in primordial germ cell (PGC) maintenance and efficiency of PGC migration. The polypeptide is Glutamate receptor-interacting protein 2 (Xenopus laevis (African clawed frog)).